Here is a 142-residue protein sequence, read N- to C-terminus: Ribosome-binding factor A (142 aa).

The disordered stretch occupies residues 119–142 (EAKQKQHGVETDAEQGDTKEEGDK).

The protein belongs to the RbfA family. Monomer. Binds 30S ribosomal subunits, but not 50S ribosomal subunits or 70S ribosomes.

The protein localises to the cytoplasm. Functionally, one of several proteins that assist in the late maturation steps of the functional core of the 30S ribosomal subunit. Associates with free 30S ribosomal subunits (but not with 30S subunits that are part of 70S ribosomes or polysomes). Required for efficient processing of 16S rRNA. May interact with the 5'-terminal helix region of 16S rRNA. The sequence is that of Ribosome-binding factor A from Shewanella pealeana (strain ATCC 700345 / ANG-SQ1).